Consider the following 354-residue polypeptide: tRNA N6-adenosine threonylcarbamoyltransferase (354 aa).

H111 and H115 together coordinate Fe cation. Substrate contacts are provided by residues L134 to G138, D167, G180, and N279. Residue D319 coordinates Fe cation.

It belongs to the KAE1 / TsaD family. Fe(2+) is required as a cofactor.

It localises to the cytoplasm. It catalyses the reaction L-threonylcarbamoyladenylate + adenosine(37) in tRNA = N(6)-L-threonylcarbamoyladenosine(37) in tRNA + AMP + H(+). Required for the formation of a threonylcarbamoyl group on adenosine at position 37 (t(6)A37) in tRNAs that read codons beginning with adenine. Is involved in the transfer of the threonylcarbamoyl moiety of threonylcarbamoyl-AMP (TC-AMP) to the N6 group of A37, together with TsaE and TsaB. TsaD likely plays a direct catalytic role in this reaction. The polypeptide is tRNA N6-adenosine threonylcarbamoyltransferase (Neisseria meningitidis).